The sequence spans 483 residues: BTB/POZ domain and ankyrin repeat-containing protein COCH (483 aa).

In terms of domain architecture, BTB spans 25-105 (SDVVFSVEGR…LYSGQVSIVP (81 aa)). A C2HC NPR-type zinc finger spans residues 111–125 (RPNCGDRGCWHTHCT). Cys-114, Cys-119, His-121, and Cys-124 together coordinate Zn(2+). ANK repeat units follow at residues 249–278 (QKIR…LNLD), 279–308 (EALA…DVNF), 313–342 (TGKT…DPNV), and 346–380 (DGVT…KLRL). 2 disordered regions span residues 395-435 (EEGN…NSNM) and 450-483 (MSTS…SHDY). Residues 398 to 414 (NNNNNANNNNTGSSATN) are compositionally biased toward low complexity. Residues 456–465 (DSGDDDHNSN) are compositionally biased toward basic and acidic residues.

It belongs to the plant 'ANKYRIN-BTB/POZ' family. 'NOOT-BOP-COCH-like' (NBCL) subfamily. Homodimer.

The protein localises to the nucleus. It is found in the cytoplasm. The protein resides in the cell membrane. It participates in protein modification; protein ubiquitination. May act as a substrate-specific adapter of an E3 ubiquitin-protein ligase complex (CUL3-RBX1-BTB) which mediates the ubiquitination and subsequent proteasomal degradation of target proteins. Transcriptional co-regulator involved in the promotion of leaf and floral meristem fate and determinacy. Promotes normal stipule growth and development. Required for the abscission of senescent organs, probably by regulating the cell wall disorganization in abscission zones (AZs, e.g. pulvini at the base of leaves). Down-regulates UNI expression in primordia of leaves and secondary inflorescences, and thereby controls their sizes and/or structures. Involved in the coordination of the symbiotic nodule developmental program. Promotes the formation of root nodules by interacting directly with APP1 to modulate the expression of the nuclear transcription factor Y subunit (NF-YA1), a key nodulin. Necessary for the robust maintenance of nodule identity throughout the nodule developmental program. This chain is BTB/POZ domain and ankyrin repeat-containing protein COCH, found in Pisum sativum (Garden pea).